The primary structure comprises 1116 residues: Protein translocase subunit SecA (1116 aa).

Residues Gln-177, 195–199 (GEGKT), and Asp-692 contribute to the ATP site.

This sequence belongs to the SecA family. In terms of assembly, monomer and homodimer. Part of the essential Sec protein translocation apparatus which comprises SecA, SecYEG and auxiliary proteins SecDF. Other proteins may also be involved.

It localises to the cell inner membrane. The protein localises to the cytoplasm. It carries out the reaction ATP + H2O + cellular proteinSide 1 = ADP + phosphate + cellular proteinSide 2.. Functionally, part of the Sec protein translocase complex. Interacts with the SecYEG preprotein conducting channel. Has a central role in coupling the hydrolysis of ATP to the transfer of proteins into and across the cell membrane, serving as an ATP-driven molecular motor driving the stepwise translocation of polypeptide chains across the membrane. This Flavobacterium psychrophilum (strain ATCC 49511 / DSM 21280 / CIP 103535 / JIP02/86) protein is Protein translocase subunit SecA.